The chain runs to 122 residues: Large ribosomal subunit protein uL14 (122 aa).

The protein belongs to the universal ribosomal protein uL14 family. As to quaternary structure, part of the 50S ribosomal subunit. Forms a cluster with proteins L3 and L19. In the 70S ribosome, L14 and L19 interact and together make contacts with the 16S rRNA in bridges B5 and B8.

Functionally, binds to 23S rRNA. Forms part of two intersubunit bridges in the 70S ribosome. In Levilactobacillus brevis (strain ATCC 367 / BCRC 12310 / CIP 105137 / JCM 1170 / LMG 11437 / NCIMB 947 / NCTC 947) (Lactobacillus brevis), this protein is Large ribosomal subunit protein uL14.